A 346-amino-acid polypeptide reads, in one-letter code: N-acetyl-gamma-glutamyl-phosphate reductase (346 aa).

Cysteine 149 is a catalytic residue.

Belongs to the NAGSA dehydrogenase family. Type 1 subfamily.

It localises to the cytoplasm. The enzyme catalyses N-acetyl-L-glutamate 5-semialdehyde + phosphate + NADP(+) = N-acetyl-L-glutamyl 5-phosphate + NADPH + H(+). The protein operates within amino-acid biosynthesis; L-arginine biosynthesis; N(2)-acetyl-L-ornithine from L-glutamate: step 3/4. Functionally, catalyzes the NADPH-dependent reduction of N-acetyl-5-glutamyl phosphate to yield N-acetyl-L-glutamate 5-semialdehyde. The chain is N-acetyl-gamma-glutamyl-phosphate reductase from Geobacter metallireducens (strain ATCC 53774 / DSM 7210 / GS-15).